Reading from the N-terminus, the 607-residue chain is Zinc finger CCCH domain-containing protein 66 (607 aa).

ANK repeat units lie at residues 57–87 and 92–124; these read EERTPLMIAALFGSKEVVDYIISTGLVDVNR and DGATALHCAVSGLSANSLEIVTLLLKGSANPDS. A compositionally biased stretch (acidic residues) spans 161–178; the sequence is LNEVNGQEESEPEVEVEV. Residues 161 to 193 are disordered; sequence LNEVNGQEESEPEVEVEVEVSPPRGSERKEYPV. 2 C3H1-type zinc fingers span residues 254 to 276 and 284 to 308; these read PCPEFRKGSCSRGDTCEYAHGIF and QYRTRLCKDETNCSRRVCFFAHKPE. A disordered region spans residues 342-363; it reads ISPLPIGATTTPPLSPNGVSSP. Residues 349–361 show a composition bias toward polar residues; sequence ATTTPPLSPNGVS.

The protein is Zinc finger CCCH domain-containing protein 66 of Arabidopsis thaliana (Mouse-ear cress).